The chain runs to 141 residues: MAIERTLSIIKPDAVAKNVIGQIYARFEAAGLKVVAAKMTHLSQGEAEAFYAVHKERPFFKDLVSFMISGPVMIQALEGEGAVLKNRDLMGATDPKKADAGTIRADFADSIDANAVHGSDAVETAREEIAFFFAGMNVYSR.

ATP contacts are provided by Lys11, Phe59, Arg87, Thr93, Arg104, and Asn114. Catalysis depends on His117, which acts as the Pros-phosphohistidine intermediate.

It belongs to the NDK family. As to quaternary structure, homotetramer. Mg(2+) is required as a cofactor.

The protein localises to the cytoplasm. It carries out the reaction a 2'-deoxyribonucleoside 5'-diphosphate + ATP = a 2'-deoxyribonucleoside 5'-triphosphate + ADP. The catalysed reaction is a ribonucleoside 5'-diphosphate + ATP = a ribonucleoside 5'-triphosphate + ADP. Functionally, major role in the synthesis of nucleoside triphosphates other than ATP. The ATP gamma phosphate is transferred to the NDP beta phosphate via a ping-pong mechanism, using a phosphorylated active-site intermediate. The chain is Nucleoside diphosphate kinase from Polaromonas naphthalenivorans (strain CJ2).